Reading from the N-terminus, the 857-residue chain is Protein STICHEL-like 2 (857 aa).

280–287 (GPRGTGKT) contacts ATP. Residues Cys-299, Cys-309, Cys-312, and Cys-315 each contribute to the Zn(2+) site. Residues 544-576 (LTRHTSEEEMQKLRNALKILSDAEKHLRASKNQ) are a coiled coil. 2 disordered regions span residues 593–629 (SSFA…DAEK) and 787–845 (ASSR…SSRL). Positions 599–610 (ENGRNQINKDVE) are enriched in basic and acidic residues. The span at 834–843 (QSETQNSKSS) shows a compositional bias: polar residues.

Belongs to the DnaX/STICHEL family.

This Arabidopsis thaliana (Mouse-ear cress) protein is Protein STICHEL-like 2.